Reading from the N-terminus, the 115-residue chain is UPF0102 protein NMB2089 (115 aa).

It belongs to the UPF0102 family.

The protein is UPF0102 protein NMB2089 of Neisseria meningitidis serogroup B (strain ATCC BAA-335 / MC58).